Consider the following 538-residue polypeptide: Syncytin-1 (538 aa).

Positions 1–20 (MALPYHIFLFTVLLPSFTLT) are cleaved as a signal peptide. Topologically, residues 21–443 (APPPCRCMTS…NIGPWGLFSQ (423 aa)) are extracellular. Asn-169 is a glycosylation site (N-linked (GlcNAc...) asparagine). The short motif at 186–189 (CWMC) is the CXXC element. Cystine bridges form between Cys-186–Cys-189, Cys-186–Cys-405, and Cys-397–Cys-404. N-linked (GlcNAc...) asparagine glycosylation is found at Asn-208, Asn-214, Asn-234, Asn-242, Asn-245, and Asn-281. Residues 320–340 (ILPFVMAAGVLGALGTGIGGI) are fusion peptide. The immunosuppression stretch occupies residues 380–396 (LQNRRALDLLTAERGGT). The short motif at 397 to 405 (CLFLGEECC) is the CX6CC element. N-linked (GlcNAc...) asparagine glycosylation is present at Asn-409. Residues 444 to 464 (WMPWILPFLGPLAAIILLLLF) form a helical membrane-spanning segment. Residues 465-484 (GPCIFNLLVNFVSSRIEAVK) are essential for the fusiogenic function. At 465-538 (GPCIFNLLVN…LLRPNSAGSS (74 aa)) the chain is on the cytoplasmic side. Positions 501–538 (PLDWPASPRSDVNDIKGTPPEEISTAQPLLRPNSAGSS) are disordered.

Belongs to the gamma type-C retroviral envelope protein family. HERV class-I W env subfamily. The mature envelope protein (Env) consists of a trimer of SU-TM heterodimers attached probably by a labile interchain disulfide bond. Interacts with the C-type lectin CD209/DC-SIGN. Post-translationally, specific enzymatic cleavages in vivo yield mature proteins. Envelope glycoproteins are synthesized as an inactive precursor that is heavily N-glycosylated and processed likely by furin in the Golgi to yield the mature SU and TM proteins. The cleavage site between SU and TM requires the minimal sequence [KR]-X-[KR]-R. The CXXC motif is highly conserved across a broad range of retroviral envelope proteins. It is thought to participate in the formation of a labile disulfide bond possibly with the CX6CC motif present in the transmembrane protein.

The protein resides in the cell membrane. It is found in the virion. In terms of biological role, this endogenous retroviral envelope protein has retained its original fusogenic properties and participates in trophoblast fusion and the formation of a syncytium during placenta morphogenesis. May recognize and induce fusion through binding of SLC1A4 and SLC1A5. Functionally, endogenous envelope proteins may have kept, lost or modified their original function during evolution. Retroviral envelope proteins mediate receptor recognition and membrane fusion during early infection. The surface protein (SU) mediates receptor recognition, while the transmembrane protein (TM) acts as a class I viral fusion protein. The protein may have at least 3 conformational states: pre-fusion native state, pre-hairpin intermediate state, and post-fusion hairpin state. During viral and target cell membrane fusion, the coiled coil regions (heptad repeats) assume a trimer-of-hairpins structure, positioning the fusion peptide in close proximity to the C-terminal region of the ectodomain. The formation of this structure appears to drive apposition and subsequent fusion of membranes. This Pongo pygmaeus (Bornean orangutan) protein is Syncytin-1 (ERVW-1).